Here is a 218-residue protein sequence, read N- to C-terminus: Probable GTP-binding protein EngB (218 aa).

The EngB-type G domain maps to 31 to 205 (VGVEIAFAGR…LGILNEWCHP (175 aa)). GTP-binding positions include 39–46 (GRSNAGKS), 66–70 (GRTQL), 84–87 (DLPG), 151–154 (TKCD), and 184–186 (FSS). 2 residues coordinate Mg(2+): Ser-46 and Thr-68.

It belongs to the TRAFAC class TrmE-Era-EngA-EngB-Septin-like GTPase superfamily. EngB GTPase family. Mg(2+) is required as a cofactor.

Its function is as follows. Necessary for normal cell division and for the maintenance of normal septation. The protein is Probable GTP-binding protein EngB of Shewanella loihica (strain ATCC BAA-1088 / PV-4).